A 227-amino-acid polypeptide reads, in one-letter code: Transmembrane emp24 domain-containing protein 1 (227 aa).

A signal peptide spans 1 to 24 (MMAAGAAVALALWLLLPAVGVGEA). Residues 25–194 (GPPPIQDGEF…LQEDNLERVN (170 aa)) lie on the Extracellular side of the membrane. Residues 43–125 (KQCFYQSAPA…EKLVFFELIF (83 aa)) form the GOLD domain. Residues 145 to 170 (EMLDVKMEDIKESIETMRTRLERSIQ) are a coiled coil. The chain crosses the membrane as a helical span at residues 195 to 215 (FWSAANVAVLLLVAVLQVCTL). The Cytoplasmic segment spans residues 216–227 (KRFFHDKRPVPT). Residues 218–219 (FF) carry the COPII vesicle coat-binding motif. Positions 218–227 (FFHDKRPVPT) match the COPI vesicle coat-binding motif.

Belongs to the EMP24/GP25L family. As to quaternary structure, homodimer in endoplasmic reticulum, endoplasmic reticulum-Golgi intermediate compartment and cis-Golgi network. Interacts with IL1RL1. Interacts with RNF26; this interaction is important to modulate innate immune signaling through the cGAS-STING pathway. In terms of tissue distribution, widely expressed.

Its subcellular location is the cell membrane. It is found in the endoplasmic reticulum membrane. It localises to the golgi apparatus. The protein localises to the cis-Golgi network membrane. The protein resides in the endoplasmic reticulum-Golgi intermediate compartment membrane. Its function is as follows. Potential role in vesicular protein trafficking, mainly in the early secretory pathway. May act as a cargo receptor at the lumenal side for incorporation of secretory cargo molecules into transport vesicles and may be involved in vesicle coat formation at the cytoplasmic side. Plays a positive role in IL-33-mediated IL-8 and IL-6 production by interacting with interleukin-33 receptor IL1RL1. Plays also a role in the modulation of innate immune signaling through the cGAS-STING pathway by interacting with RNF26. In Mus musculus (Mouse), this protein is Transmembrane emp24 domain-containing protein 1 (Tmed1).